The sequence spans 242 residues: Venom nerve growth factor (242 aa).

An N-terminal signal peptide occupies residues 1–18; sequence MSMMCYTLIIAFLIGIWA. Positions 19–125 are excised as a propeptide; sequence APKSEDNVPL…TLNRNIRAKR (107 aa). Residues 47-66 are compositionally biased toward basic and acidic residues; it reads GLKTSRNTDQRHPAPKKAED. The tract at residues 47-70 is disordered; the sequence is GLKTSRNTDQRHPAPKKAEDQELG. Intrachain disulfides connect Cys-139/Cys-203, Cys-181/Cys-231, and Cys-191/Cys-233. A glycan (N-linked (GlcNAc...) asparagine) is linked at Asn-166.

Belongs to the NGF-beta family. In terms of assembly, homodimer; non-covalently linked. In terms of tissue distribution, expressed by the venom gland.

Its subcellular location is the secreted. Functionally, nerve growth factor is important for the development and maintenance of the sympathetic and sensory nervous systems. It stimulates division and differentiation of sympathetic and embryonic sensory neurons as well as basal forebrain cholinergic neurons in the brain. Its relevance in the snake venom is not clear. However, it has been shown to inhibit metalloproteinase-dependent proteolysis of platelet glycoprotein Ib alpha, suggesting a metalloproteinase inhibition to prevent metalloprotease autodigestion and/or protection against prey proteases. Binds a lipid between the two protein chains in the homodimer. The lipid-bound form promotes histamine relase from mouse mast cells, contrary to the lipid-free form. This is Venom nerve growth factor from Drysdalia coronoides (White-lipped snake).